The following is an 882-amino-acid chain: Bifunctional heparan sulfate N-deacetylase/N-sulfotransferase 1 (882 aa).

Residues 1–17 (MPALACLRRLCRHVSPQ) are Cytoplasmic-facing. The interval 1 to 169 (MPALACLRRL…VAYGVGIIGF (169 aa)) is sufficient for localization to Golgi membrane. A helical; Signal-anchor for type II membrane protein transmembrane segment spans residues 18 to 39 (AVLFLLFIFCLFSVFISAYYLY). A heparan sulfate N-deacetylase 1 region spans residues 40–598 (GWKRGLEPSA…KRHKDIWSKE (559 aa)). Topologically, residues 40–882 (GWKRGLEPSA…WLREDLQNTR (843 aa)) are lumenal. N-linked (GlcNAc...) asparagine glycosylation is found at N231, N351, and N401. The interval 599-882 (KTCDRFPKLL…WLREDLQNTR (284 aa)) is heparan sulfate N-sulfotransferase 1. Residue K614 is the For sulfotransferase activity of the active site. Adenosine 3',5'-bisphosphate is bound at residue 614-618 (KTGTT). N667 carries an N-linked (GlcNAc...) asparagine glycan. Adenosine 3',5'-bisphosphate contacts are provided by S712 and W817. An intrachain disulfide couples C818 to C828. An adenosine 3',5'-bisphosphate-binding site is contributed by 833-837 (KGRKY).

Belongs to the sulfotransferase 1 family. NDST subfamily. As to quaternary structure, monomer. In terms of assembly, interacts with heparan sulfate co-polymerase subunits EXT1 and EXT2. Interacts with NDST1 isoform 3. Interacts with heparan sulfate co-polymerase subunits EXT1 and EXT2. Interacts with NDST1 isoform 1. In terms of tissue distribution, widely expressed. Expression is most abundant in heart, liver and pancreas.

It is found in the golgi apparatus. It localises to the trans-Golgi network membrane. The protein localises to the cis-Golgi network membrane. It catalyses the reaction N-acetyl-alpha-D-glucosaminyl-[heparan sulfate](n) + H2O = alpha-D-glucosaminyl-[heparan sulfate](n) + acetate. The enzyme catalyses alpha-D-glucosaminyl-[heparan sulfate](n) + 3'-phosphoadenylyl sulfate = N-sulfo-alpha-D-glucosaminyl-[heparan sulfate](n) + adenosine 3',5'-bisphosphate + 2 H(+). It functions in the pathway glycan metabolism; heparan sulfate biosynthesis. Its pathway is glycan metabolism; heparin biosynthesis. Its function is as follows. Essential bifunctional enzyme that catalyzes both the N-deacetylation and the N-sulfation of glucosamine (GlcNAc) of the glycosaminoglycan in heparan sulfate. Modifies the GlcNAc-GlcA disaccharide repeating sugar backbone to make N-sulfated heparosan, a prerequisite substrate for later modifications in heparin biosynthesis. Plays a role in determining the extent and pattern of sulfation of heparan sulfate. Participates in biosynthesis of heparan sulfate that can ultimately serve as L-selectin ligands, thereby playing a role in inflammatory response. Required for the exosomal release of SDCBP, CD63 and syndecan. Functionally, lacks both N-deacetylase and N-sulfotransferase activities. Acts as a dominant negative on isoform 1, likely by changing the composition of enzyme complexes responsible for elongation and modification of heparan sulfates. The polypeptide is Bifunctional heparan sulfate N-deacetylase/N-sulfotransferase 1 (Homo sapiens (Human)).